The chain runs to 214 residues: tRNA (guanine-N(7)-)-methyltransferase (214 aa).

Positions 44, 69, 96, and 118 each coordinate S-adenosyl-L-methionine. D118 is a catalytic residue. Substrate contacts are provided by residues K122, D154, and 191-194 (TEYE).

The protein belongs to the class I-like SAM-binding methyltransferase superfamily. TrmB family.

The enzyme catalyses guanosine(46) in tRNA + S-adenosyl-L-methionine = N(7)-methylguanosine(46) in tRNA + S-adenosyl-L-homocysteine. The protein operates within tRNA modification; N(7)-methylguanine-tRNA biosynthesis. Functionally, catalyzes the formation of N(7)-methylguanine at position 46 (m7G46) in tRNA. This Listeria monocytogenes serotype 4b (strain F2365) protein is tRNA (guanine-N(7)-)-methyltransferase.